A 205-amino-acid polypeptide reads, in one-letter code: Urease accessory protein UreG (205 aa).

Residue 14–21 coordinates GTP; it reads GPVGSGKT.

The protein belongs to the SIMIBI class G3E GTPase family. UreG subfamily. In terms of assembly, homodimer. UreD, UreF and UreG form a complex that acts as a GTP-hydrolysis-dependent molecular chaperone, activating the urease apoprotein by helping to assemble the nickel containing metallocenter of UreC. The UreE protein probably delivers the nickel.

Its subcellular location is the cytoplasm. Facilitates the functional incorporation of the urease nickel metallocenter. This process requires GTP hydrolysis, probably effectuated by UreG. This Proteus mirabilis (strain HI4320) protein is Urease accessory protein UreG.